The following is a 238-amino-acid chain: tRNA (guanine-N(1)-)-methyltransferase (238 aa).

S-adenosyl-L-methionine-binding positions include glycine 108 and leucine 127–leucine 132.

This sequence belongs to the RNA methyltransferase TrmD family. Homodimer.

It localises to the cytoplasm. The catalysed reaction is guanosine(37) in tRNA + S-adenosyl-L-methionine = N(1)-methylguanosine(37) in tRNA + S-adenosyl-L-homocysteine + H(+). In terms of biological role, specifically methylates guanosine-37 in various tRNAs. The chain is tRNA (guanine-N(1)-)-methyltransferase from Streptococcus uberis (strain ATCC BAA-854 / 0140J).